A 409-amino-acid polypeptide reads, in one-letter code: Failed axon connections homolog (409 aa).

The helical transmembrane segment at 68–88 threads the bilayer; that stretch reads YLTGGALLAAAAYLLHELLVI. The segment at 372 to 409 is disordered; that stretch reads DEGAENSFSRTPDTDFTGHSLFDSDVDMDDYTDHEQCK.

This sequence belongs to the FAX family.

It is found in the membrane. Its function is as follows. May play a role in axonal development. This chain is Failed axon connections homolog (FAXC), found in Homo sapiens (Human).